A 187-amino-acid chain; its full sequence is Threonylcarbamoyl-AMP synthase (187 aa).

Positions 4-187 (TLTLSEAVTA…DARSGHILRL (184 aa)) constitute a YrdC-like domain.

The protein belongs to the SUA5 family. TsaC subfamily.

It is found in the cytoplasm. It catalyses the reaction L-threonine + hydrogencarbonate + ATP = L-threonylcarbamoyladenylate + diphosphate + H2O. In terms of biological role, required for the formation of a threonylcarbamoyl group on adenosine at position 37 (t(6)A37) in tRNAs that read codons beginning with adenine. Catalyzes the conversion of L-threonine, HCO(3)(-)/CO(2) and ATP to give threonylcarbamoyl-AMP (TC-AMP) as the acyladenylate intermediate, with the release of diphosphate. The protein is Threonylcarbamoyl-AMP synthase of Xylella fastidiosa (strain M12).